Consider the following 545-residue polypeptide: Chaperonin GroEL 1 (545 aa).

ATP is bound by residues 29–32 (TLGP), 86–90 (DGTTT), Gly413, 479–481 (DAA), and Asp495. The disordered stretch occupies residues 525 to 545 (PEPKENNPAGSGAGMGGDFDY). Over residues 535 to 545 (SGAGMGGDFDY) the composition is skewed to gly residues.

This sequence belongs to the chaperonin (HSP60) family. Forms a cylinder of 14 subunits composed of two heptameric rings stacked back-to-back. Interacts with the co-chaperonin GroES.

Its subcellular location is the cytoplasm. The enzyme catalyses ATP + H2O + a folded polypeptide = ADP + phosphate + an unfolded polypeptide.. Functionally, together with its co-chaperonin GroES, plays an essential role in assisting protein folding. The GroEL-GroES system forms a nano-cage that allows encapsulation of the non-native substrate proteins and provides a physical environment optimized to promote and accelerate protein folding. In Thermosynechococcus vestitus (strain NIES-2133 / IAM M-273 / BP-1), this protein is Chaperonin GroEL 1.